The chain runs to 572 residues: MNFHRRRYPYYNRLRRLLPLVIAVSLSLLILFAFLSFLAPPPGDSDRLPPRVRYSSNDAIKATGFHIPRAGGRSDRDIWRSRNAEFFFGCSNASSKFANSKAVTRNDRYLVIATSGGLNQQRTGIVDAVVAARILNATLVVPKLDQKSYWKDASDFSHIFDVDWFISFLSGDVRIIKQLPLKGGRTWSTSRMRVPRKCNERCYINRVLPVLLKRHAVQLNKFDYRLSNKLSDDLQKLRCRVNYHALKFTDPILTMGNELVRRMRLRSKHFIALHLRYEPDMLAFSGCYYGGGDKERRELAAIRRRWKTLHINNPEKQRRQGRCPLTPEEVGLMLRALGYGSDVHIYVASGEVYGGEESLAPLKALFPHFYSKDTIATKEELEPFSSYSSRMAALDFLVCDESDVFVTNNNGNMAKILAGRRRYLGHKPTVRPNAKKLYRLFMNKENTTWEEFSSKVRSFQRGFMGEPKEVRAGRGEFHENPSTCICEDTEAKAKAQLESRKLGKKNKSTNKDAAVTVTNDDQTEEDDPDWSEPDYEEEQSDLQDRGLYNGTSLDYDDPSTSDEPELEAMLSD.

A helical; Signal-anchor for type II membrane protein membrane pass occupies residues Leu17–Phe37. Residues Asn92 and Asn136 are each glycosylated (N-linked (GlcNAc...) asparagine). His274–Arg276 contacts substrate. N-linked (GlcNAc...) asparagine glycans are attached at residues Asn446 and Asn506. Positions Glu498–Asp572 are disordered. Residues Asp521–Asp541 are compositionally biased toward acidic residues. Asn549 carries N-linked (GlcNAc...) asparagine glycosylation. The span at Asp554–Leu566 shows a compositional bias: acidic residues.

This sequence belongs to the glycosyltransferase GT106 family.

It is found in the membrane. It functions in the pathway glycan metabolism. The sequence is that of O-fucosyltransferase 16 from Arabidopsis thaliana (Mouse-ear cress).